The chain runs to 161 residues: MKKPLILFLITAGLVLLLDQFTKFYVASHFWLHESLPVIDGFFNITYIRNPGAAFGFLAGAPLLFRGLFFTSVTLIAAGLILFYLIKNRVSDLMMVIPLALVLAGAMGNLVDRIRFGEVIDFLDVYIGRYHWPAFNIADTAISIGVLFLVVDMIQKQKEKS.

3 consecutive transmembrane segments (helical) span residues 6-26 (ILFLITAGLVLLLDQFTKFYV), 67-87 (GLFFTSVTLIAAGLILFYLIK), and 90-110 (VSDLMMVIPLALVLAGAMGNL). Residues Asp121 and Asp139 contribute to the active site. A helical transmembrane segment spans residues 134–154 (AFNIADTAISIGVLFLVVDMI).

Belongs to the peptidase A8 family.

Its subcellular location is the cell inner membrane. The enzyme catalyses Release of signal peptides from bacterial membrane prolipoproteins. Hydrolyzes -Xaa-Yaa-Zaa-|-(S,diacylglyceryl)Cys-, in which Xaa is hydrophobic (preferably Leu), and Yaa (Ala or Ser) and Zaa (Gly or Ala) have small, neutral side chains.. It functions in the pathway protein modification; lipoprotein biosynthesis (signal peptide cleavage). This protein specifically catalyzes the removal of signal peptides from prolipoproteins. This chain is Lipoprotein signal peptidase, found in Syntrophus aciditrophicus (strain SB).